The following is a 121-amino-acid chain: MIQQETFLNVADNSGAKRIQCIRVLGTNRRYAHVGDVIVATVKDAMPNMGVKKSDIVKAVVVRTKHTMRRETGNAIRFDDNAAVIINDDKNPRGTRVFGPVARELRERSFTKIVSLAPEVI.

This sequence belongs to the universal ribosomal protein uL14 family. As to quaternary structure, part of the 50S ribosomal subunit. Forms a cluster with proteins L3 and L19. In the 70S ribosome, L14 and L19 interact and together make contacts with the 16S rRNA in bridges B5 and B8.

Functionally, binds to 23S rRNA. Forms part of two intersubunit bridges in the 70S ribosome. In Synechococcus sp. (strain RCC307), this protein is Large ribosomal subunit protein uL14.